The following is a 93-amino-acid chain: Protein S100-A5 (93 aa).

EF-hand domains are found at residues 12 to 47 and 48 to 83; these read MVTTFHKYSGREGSKLTLSRKELKELIKTELSLAEK and MKESSIDNLMKSLDKNSDQEIDFKEYSVFLTTLCMA. 7 residues coordinate Ca(2+): Thr28, Glu33, Asp61, Asn63, Asp65, Glu67, and Glu72.

Belongs to the S-100 family. In terms of assembly, homodimer.

Functionally, binds calcium, zinc and copper. One subunit can simultaneously bind 2 calcium ions or 2 copper ions plus 1 zinc ion. Calcium and copper ions compete for the same binding sites. This is Protein S100-A5 (S100a5) from Mus musculus (Mouse).